We begin with the raw amino-acid sequence, 381 residues long: Succinyl-diaminopimelate desuccinylase (381 aa).

H70 is a binding site for Zn(2+). D72 is a catalytic residue. D103 is a Zn(2+) binding site. The active-site Proton acceptor is the E136. Residues E137, E165, and H354 each coordinate Zn(2+).

The protein belongs to the peptidase M20A family. DapE subfamily. Homodimer. Zn(2+) serves as cofactor. It depends on Co(2+) as a cofactor.

The catalysed reaction is N-succinyl-(2S,6S)-2,6-diaminopimelate + H2O = (2S,6S)-2,6-diaminopimelate + succinate. The protein operates within amino-acid biosynthesis; L-lysine biosynthesis via DAP pathway; LL-2,6-diaminopimelate from (S)-tetrahydrodipicolinate (succinylase route): step 3/3. Catalyzes the hydrolysis of N-succinyl-L,L-diaminopimelic acid (SDAP), forming succinate and LL-2,6-diaminopimelate (DAP), an intermediate involved in the bacterial biosynthesis of lysine and meso-diaminopimelic acid, an essential component of bacterial cell walls. The chain is Succinyl-diaminopimelate desuccinylase from Roseobacter denitrificans (strain ATCC 33942 / OCh 114) (Erythrobacter sp. (strain OCh 114)).